Reading from the N-terminus, the 162-residue chain is NADH-quinone oxidoreductase subunit C (162 aa).

This sequence belongs to the complex I 30 kDa subunit family. NDH-1 is composed of 14 different subunits. Subunits NuoB, C, D, E, F, and G constitute the peripheral sector of the complex.

It is found in the cell inner membrane. The catalysed reaction is a quinone + NADH + 5 H(+)(in) = a quinol + NAD(+) + 4 H(+)(out). In terms of biological role, NDH-1 shuttles electrons from NADH, via FMN and iron-sulfur (Fe-S) centers, to quinones in the respiratory chain. The immediate electron acceptor for the enzyme in this species is believed to be ubiquinone. Couples the redox reaction to proton translocation (for every two electrons transferred, four hydrogen ions are translocated across the cytoplasmic membrane), and thus conserves the redox energy in a proton gradient. In Geobacter sulfurreducens (strain ATCC 51573 / DSM 12127 / PCA), this protein is NADH-quinone oxidoreductase subunit C.